We begin with the raw amino-acid sequence, 461 residues long: ATP synthase subunit beta (461 aa).

An ATP-binding site is contributed by 151 to 158 (GGAGVGKT).

This sequence belongs to the ATPase alpha/beta chains family. As to quaternary structure, F-type ATPases have 2 components, CF(1) - the catalytic core - and CF(0) - the membrane proton channel. CF(1) has five subunits: alpha(3), beta(3), gamma(1), delta(1), epsilon(1). CF(0) has three main subunits: a(1), b(2) and c(9-12). The alpha and beta chains form an alternating ring which encloses part of the gamma chain. CF(1) is attached to CF(0) by a central stalk formed by the gamma and epsilon chains, while a peripheral stalk is formed by the delta and b chains.

It is found in the cell inner membrane. The catalysed reaction is ATP + H2O + 4 H(+)(in) = ADP + phosphate + 5 H(+)(out). Produces ATP from ADP in the presence of a proton gradient across the membrane. The catalytic sites are hosted primarily by the beta subunits. In Pseudoalteromonas translucida (strain TAC 125), this protein is ATP synthase subunit beta.